We begin with the raw amino-acid sequence, 431 residues long: MAQKIQSVKGMNDLLPVEQKDFKLTAAFWQAFEDTVGRWTRTYGYQQIRTPIVEQTGLFVRSIGEETDVVGKEMYTFSDSNDSLSLSLRPEGTASCLRAVVEHNLLYNSPQKLWYMGPMFRRERPQKGRYRQFHQVGIEALGFEGPDIDAEIIAMSADLWEKLGIREYLTLEINSLGNREERAAHRAALVEYLTRYEDKLDEDSKRRLKTNPLRVLDTKNPDLQEICNAAPRLVDYLGEASQNHYARFKAMLDGLGIQYIENPRLVRGLDYYNQTVFEWTTDKLGAQATVCGGGRYDGLIEELGGKPAPSIGFAMGIERLLFLVSEYGSLEVNAAPDVYAMHQGERADLQVMKYAQALRTQGFNVMQHSGYQSLKAQMKKADNSGARFALIVAQDELANGTVTLKDMNGAHGQQTVAAADLTNTLQQWKNA.

It belongs to the class-II aminoacyl-tRNA synthetase family. Homodimer.

The protein resides in the cytoplasm. It catalyses the reaction tRNA(His) + L-histidine + ATP = L-histidyl-tRNA(His) + AMP + diphosphate + H(+). The chain is Histidine--tRNA ligase from Neisseria meningitidis serogroup C (strain 053442).